A 334-amino-acid polypeptide reads, in one-letter code: Ferredoxin--NADP reductase (334 aa).

Residues Asp-33, Gln-41, Tyr-46, Ala-86, Phe-120, Asp-286, and Thr-327 each contribute to the FAD site.

Belongs to the ferredoxin--NADP reductase type 2 family. In terms of assembly, homodimer. The cofactor is FAD.

The enzyme catalyses 2 reduced [2Fe-2S]-[ferredoxin] + NADP(+) + H(+) = 2 oxidized [2Fe-2S]-[ferredoxin] + NADPH. This chain is Ferredoxin--NADP reductase, found in Rickettsia prowazekii (strain Madrid E).